Reading from the N-terminus, the 114-residue chain is Putative pterin-4-alpha-carbinolamine dehydratase (114 aa).

This sequence belongs to the pterin-4-alpha-carbinolamine dehydratase family.

It catalyses the reaction (4aS,6R)-4a-hydroxy-L-erythro-5,6,7,8-tetrahydrobiopterin = (6R)-L-erythro-6,7-dihydrobiopterin + H2O. This is Putative pterin-4-alpha-carbinolamine dehydratase from Chlorobium luteolum (strain DSM 273 / BCRC 81028 / 2530) (Pelodictyon luteolum).